The sequence spans 233 residues: Biosynthetic peptidoglycan transglycosylase (233 aa).

The helical transmembrane segment at 4-24 threads the bilayer; it reads LAYLAGCLIVGVVAMQVYFFL.

The protein belongs to the glycosyltransferase 51 family.

Its subcellular location is the cell inner membrane. The enzyme catalyses [GlcNAc-(1-&gt;4)-Mur2Ac(oyl-L-Ala-gamma-D-Glu-L-Lys-D-Ala-D-Ala)](n)-di-trans,octa-cis-undecaprenyl diphosphate + beta-D-GlcNAc-(1-&gt;4)-Mur2Ac(oyl-L-Ala-gamma-D-Glu-L-Lys-D-Ala-D-Ala)-di-trans,octa-cis-undecaprenyl diphosphate = [GlcNAc-(1-&gt;4)-Mur2Ac(oyl-L-Ala-gamma-D-Glu-L-Lys-D-Ala-D-Ala)](n+1)-di-trans,octa-cis-undecaprenyl diphosphate + di-trans,octa-cis-undecaprenyl diphosphate + H(+). It participates in cell wall biogenesis; peptidoglycan biosynthesis. Peptidoglycan polymerase that catalyzes glycan chain elongation from lipid-linked precursors. The chain is Biosynthetic peptidoglycan transglycosylase from Cupriavidus metallidurans (strain ATCC 43123 / DSM 2839 / NBRC 102507 / CH34) (Ralstonia metallidurans).